The primary structure comprises 96 residues: (4S)-4-hydroxy-5-phosphonooxypentane-2,3-dione isomerase (96 aa).

One can recognise an ABM domain in the interval 2–91 (HVTLVEINVH…MTGPRTKKVF (90 aa)).

It belongs to the LsrG family. As to quaternary structure, homodimer.

It localises to the cytoplasm. The catalysed reaction is (2S)-2-hydroxy-3,4-dioxopentyl phosphate = 3-hydroxy-2,4-dioxopentyl phosphate. Functionally, involved in the degradation of phospho-AI-2, thereby terminating induction of the lsr operon and closing the AI-2 signaling cycle. Catalyzes the conversion of (4S)-4-hydroxy-5-phosphonooxypentane-2,3-dione (P-DPD) to 3-hydroxy-5-phosphonooxypentane-2,4-dione (P-HPD). The chain is (4S)-4-hydroxy-5-phosphonooxypentane-2,3-dione isomerase from Salmonella typhimurium (strain LT2 / SGSC1412 / ATCC 700720).